A 158-amino-acid polypeptide reads, in one-letter code: 6,7-dimethyl-8-ribityllumazine synthase (158 aa).

Residues Trp28, 59-61 (TVE), and 81-83 (VVV) contribute to the 5-amino-6-(D-ribitylamino)uracil site. A (2S)-2-hydroxy-3-oxobutyl phosphate-binding site is contributed by 86-87 (DT). His89 serves as the catalytic Proton donor. Phe114 serves as a coordination point for 5-amino-6-(D-ribitylamino)uracil. Arg128 provides a ligand contact to (2S)-2-hydroxy-3-oxobutyl phosphate.

It belongs to the DMRL synthase family.

The catalysed reaction is (2S)-2-hydroxy-3-oxobutyl phosphate + 5-amino-6-(D-ribitylamino)uracil = 6,7-dimethyl-8-(1-D-ribityl)lumazine + phosphate + 2 H2O + H(+). The protein operates within cofactor biosynthesis; riboflavin biosynthesis; riboflavin from 2-hydroxy-3-oxobutyl phosphate and 5-amino-6-(D-ribitylamino)uracil: step 1/2. Catalyzes the formation of 6,7-dimethyl-8-ribityllumazine by condensation of 5-amino-6-(D-ribitylamino)uracil with 3,4-dihydroxy-2-butanone 4-phosphate. This is the penultimate step in the biosynthesis of riboflavin. This is 6,7-dimethyl-8-ribityllumazine synthase from Micrococcus luteus (strain ATCC 4698 / DSM 20030 / JCM 1464 / CCM 169 / CCUG 5858 / IAM 1056 / NBRC 3333 / NCIMB 9278 / NCTC 2665 / VKM Ac-2230) (Micrococcus lysodeikticus).